A 225-amino-acid polypeptide reads, in one-letter code: Ribosomal RNA small subunit methyltransferase G (225 aa).

Residues Gly62, 113 to 114, and Lys130 each bind S-adenosyl-L-methionine; that span reads AE.

This sequence belongs to the methyltransferase superfamily. RNA methyltransferase RsmG family.

It localises to the cytoplasm. Functionally, specifically methylates the N7 position of a guanine in 16S rRNA. In Petrotoga mobilis (strain DSM 10674 / SJ95), this protein is Ribosomal RNA small subunit methyltransferase G.